The following is a 121-amino-acid chain: Large ribosomal subunit protein uL14 (121 aa).

The protein belongs to the universal ribosomal protein uL14 family. Part of the 50S ribosomal subunit. Forms a cluster with proteins L3 and L19. In the 70S ribosome, L14 and L19 interact and together make contacts with the 16S rRNA in bridges B5 and B8.

In terms of biological role, binds to 23S rRNA. Forms part of two intersubunit bridges in the 70S ribosome. The sequence is that of Large ribosomal subunit protein uL14 from Phocaeicola vulgatus (strain ATCC 8482 / DSM 1447 / JCM 5826 / CCUG 4940 / NBRC 14291 / NCTC 11154) (Bacteroides vulgatus).